The chain runs to 167 residues: Protein archease (167 aa).

A2 is subject to N-acetylalanine. Residues D39, D166, and I167 each coordinate Ca(2+).

It belongs to the archease family. As to quaternary structure, component of the tRNA-splicing ligase complex.

In terms of biological role, component of the tRNA-splicing ligase complex required to facilitate the enzymatic turnover of catalytic subunit RTCB. Together with DDX1, acts by facilitating the guanylylation of RTCB, a key intermediate step in tRNA ligation. The sequence is that of Protein archease (ZBTB8OS) from Bos taurus (Bovine).